The chain runs to 220 residues: Iron-sulfur cluster repair protein YtfE (220 aa).

This sequence belongs to the RIC family. YtfE subfamily. As to quaternary structure, homodimer.

The protein resides in the cytoplasm. Functionally, di-iron-containing protein involved in the repair of iron-sulfur clusters damaged by oxidative and nitrosative stress conditions. The polypeptide is Iron-sulfur cluster repair protein YtfE (Salmonella choleraesuis (strain SC-B67)).